Here is a 132-residue protein sequence, read N- to C-terminus: uncharacterized protein (132 aa).

3 helical membrane passes run 19-39 (FTWI…FIFL), 58-78 (IGLR…VAVM), and 93-113 (LIAY…CAAL).

It belongs to the bacteriophage holin family. Cp-1 holin subfamily.

It is found in the cell membrane. This is an uncharacterized protein from Clostridium perfringens.